A 505-amino-acid polypeptide reads, in one-letter code: ATP synthase subunit alpha (505 aa).

172-179 is an ATP binding site; sequence GDRQIGKT.

Belongs to the ATPase alpha/beta chains family. As to quaternary structure, F-type ATPases have 2 components, CF(1) - the catalytic core - and CF(0) - the membrane proton channel. CF(1) has five subunits: alpha(3), beta(3), gamma(1), delta(1), epsilon(1). CF(0) has three main subunits: a(1), b(2) and c(9-12). The alpha and beta chains form an alternating ring which encloses part of the gamma chain. CF(1) is attached to CF(0) by a central stalk formed by the gamma and epsilon chains, while a peripheral stalk is formed by the delta and b chains.

The protein localises to the cell inner membrane. It carries out the reaction ATP + H2O + 4 H(+)(in) = ADP + phosphate + 5 H(+)(out). Functionally, produces ATP from ADP in the presence of a proton gradient across the membrane. The alpha chain is a regulatory subunit. This chain is ATP synthase subunit alpha, found in Syntrophobacter fumaroxidans (strain DSM 10017 / MPOB).